The sequence spans 933 residues: Serine/threonine-protein kinase EDR1 (933 aa).

Over residues Met1–Arg10 the composition is skewed to basic residues. Disordered stretches follow at residues Met1–Met74, Cys342–Gly424, His527–Ser550, and His604–Asp650. The span at Asn37–Glu48 shows a compositional bias: polar residues. Residues Ala53–Ser68 show a composition bias toward low complexity. The segment covering Cys342–Asn356 has biased composition (polar residues). Residues Ser367–Ser378 are compositionally biased toward low complexity. Residues Leu379–Asp389 show a composition bias toward basic and acidic residues. Residues Ser404–Thr413 are compositionally biased toward low complexity. Polar residues predominate over residues Gly533–Ser550. A compositionally biased stretch (basic and acidic residues) spans Gln607 to Ser621. In terms of domain architecture, Protein kinase spans Leu669–Asn925. Residues Ile675 to Val683 and Lys696 contribute to the ATP site. Residue Asp792 is the Proton acceptor of the active site.

The protein belongs to the protein kinase superfamily. TKL Ser/Thr protein kinase family. RAF subfamily. As to quaternary structure, interacts with KEG. Binds and recruited by EDR4 at the powdery mildew (e.g. G.cichoracearum) penetration site on the plasma membrane. In terms of processing, autophosphorylated.

The protein localises to the cell membrane. It is found in the endosome. The protein resides in the nucleus. It localises to the endoplasmic reticulum. Its subcellular location is the golgi apparatus. The protein localises to the trans-Golgi network. It is found in the early endosome. It catalyses the reaction L-seryl-[protein] + ATP = O-phospho-L-seryl-[protein] + ADP + H(+). It carries out the reaction L-threonyl-[protein] + ATP = O-phospho-L-threonyl-[protein] + ADP + H(+). Its function is as follows. MAPKKK serine/threonine-protein kinase involved in the regulation of a MAP kinase cascade (probably including MPK3 and MPK6) that negatively regulates salicylic acid- (SA-) dependent defense responses, abscisic acid (ABA) signaling, and ethylene-induced senescence. Also modulates stress response (e.g. drought) signaling and cell death, in an ORE9-dependent manner. Functions at a point of cross talk between ethylene, ABA and SA signaling that impinges on senescence and cell death. On the other hand, it confers sensitivity to various pathogens such as the fungus E.cichoracearum, the oomycete H.parasitica and the bacteria P.syringae pv. tomato DC3000. Required for resistance to some hemibiotrophic/necrotrophic fungal pathogens (e.g. C.gloeosporioides, C.higginsianum and A.brassicicola) through the induction of defensin expression, probably by repressing MYC2, an inhibitor of defensin genes (PDFs). Together with KEG, may regulate endocytic trafficking and/or the formation of signaling complexes on trans-Golgi network (TGN)/ early endosome (EE) vesicles during stress responses. In Arabidopsis thaliana (Mouse-ear cress), this protein is Serine/threonine-protein kinase EDR1 (EDR1).